We begin with the raw amino-acid sequence, 334 residues long: Ornithine carbamoyltransferase (334 aa).

Carbamoyl phosphate-binding positions include 57 to 60 (STRT), glutamine 84, arginine 108, and 135 to 138 (HPTQ). L-ornithine contacts are provided by residues asparagine 169, aspartate 233, and 237–238 (SM). Carbamoyl phosphate-binding positions include 275 to 276 (CL) and arginine 320.

This sequence belongs to the aspartate/ornithine carbamoyltransferase superfamily. OTCase family.

It localises to the cytoplasm. It catalyses the reaction carbamoyl phosphate + L-ornithine = L-citrulline + phosphate + H(+). Its pathway is amino-acid biosynthesis; L-arginine biosynthesis; L-arginine from L-ornithine and carbamoyl phosphate: step 1/3. Reversibly catalyzes the transfer of the carbamoyl group from carbamoyl phosphate (CP) to the N(epsilon) atom of ornithine (ORN) to produce L-citrulline. In Vibrio vulnificus (strain YJ016), this protein is Ornithine carbamoyltransferase.